A 308-amino-acid chain; its full sequence is MGLIARASRIRRSSGVSCEYYRLELQFVQLVESLGIPRAGFLFLTEERMFDLRFPFGIDTTTFYRMRVPTSLLSPGLPAEQWTTLFRQELTELQGYFSSHLFSTLRALHLYPFSAGSVRVYLVLFDTRTDVEEGALAADLHGDASGEERVRSFILAVQARFSFIEASRPVYPRQPELAPSCSQLEFALNNQRMANLFTISINQSALPPAVLQEELSMVRRCCALSNQLLTLVGNDNLASCVASRELRVVVFSSFPVDPELYLNQLTRGVSAYFVNHAENSLLITSSGTTRAQTDVLRFLQYETGETCR.

This is an uncharacterized protein from Treponema pallidum (strain Nichols).